Here is a 465-residue protein sequence, read N- to C-terminus: MTGRAMDPLPAAAVGAAAEAEADEEADPPASDLPTPQAIEPQAIVQQVPAPSRMQMPQGNPLLLSHTLQELLARDTVQVELIPEKKGLFLKHVEYEVSSQRFKSSVYRRYNDFVVFQEMLLHKFPYRMVPALPPKRMLGADREFIEARRRALKRFVNLVARHPLFSEDVVLKLFLSFSGSDVQNKLKESAQCVGDEFLNCKLATRAKDFLPADIQAQFAISRELIRNIYNSFHKLRDRAERIASRAIDNAADLLIFGKELSAIGSDTTPLPSWAALNSSTWGSLKQALKGLSVEFALLADKAAQQGKQEENDVVEKLNLFLDLLQSYKDLCERHEKGVLHKHQRALHKYSLMKRQMMSATAQNREPESVEQLESRIVEQENAIQTMELRNYFSLYCLHQETQLIHVYLPLTSHILRAFVNSQIQGHKEMSKVWNDLRPKLSCLFAGPHSTLTPPCSPPEDGLCPH.

A compositionally biased stretch (low complexity) spans 1–19 (MTGRAMDPLPAAAVGAAAE). The interval 1 to 36 (MTGRAMDPLPAAAVGAAAEAEADEEADPPASDLPTP) is disordered. One can recognise a PX domain in the interval 73–181 (ARDTVQVELI…KLFLSFSGSD (109 aa)). Positions 109, 135, and 148 each coordinate a 1,2-diacyl-sn-glycero-3-phospho-(1D-myo-inositol-3-phosphate). At Thr-452 the chain carries Phosphothreonine. The residue at position 456 (Ser-456) is a Phosphoserine.

It belongs to the sorting nexin family.

The protein resides in the early endosome membrane. Functionally, may be involved in several stages of intracellular trafficking. May play a role in intracellular protein transport from early endosomes to the trans-Golgi network. The sequence is that of Sorting nexin-8 (SNX8) from Homo sapiens (Human).